The sequence spans 360 residues: Transcription factor MYB39 (360 aa).

2 HTH myb-type domains span residues 10-62 (DKGV…MNYL) and 63-117 (RPDI…RKKL). DNA-binding regions (H-T-H motif) lie at residues 38-62 (WRSL…MNYL) and 90-113 (WSKI…NTHM). The disordered stretch occupies residues 299 to 324 (PSTGSVSVSPETTSLNHPSTAQHSSG).

It is found in the nucleus. The chain is Transcription factor MYB39 (MYB39) from Arabidopsis thaliana (Mouse-ear cress).